The chain runs to 317 residues: Protoheme IX farnesyltransferase (317 aa).

A run of 9 helical transmembrane segments spans residues 43-63 (PISV…AGAT), 65-85 (PVSG…CAGA), 119-139 (ALYW…NLNP), 140-160 (IAWI…SLWL), 168-188 (IVIG…AVTG), 195-215 (VLIA…LAIF), 238-258 (LNWL…IYFV), 261-281 (WGLV…ALSV), and 292-312 (AWVL…SMMV).

This sequence belongs to the UbiA prenyltransferase family. Protoheme IX farnesyltransferase subfamily. In terms of assembly, interacts with CtaA.

The protein resides in the cell membrane. The enzyme catalyses heme b + (2E,6E)-farnesyl diphosphate + H2O = Fe(II)-heme o + diphosphate. It participates in porphyrin-containing compound metabolism; heme O biosynthesis; heme O from protoheme: step 1/1. Its function is as follows. Converts heme B (protoheme IX) to heme O by substitution of the vinyl group on carbon 2 of heme B porphyrin ring with a hydroxyethyl farnesyl side group. The polypeptide is Protoheme IX farnesyltransferase (Desulforudis audaxviator (strain MP104C)).